The sequence spans 253 residues: 5'-nucleotidase SurE (253 aa).

Asp8, Asp9, Ser39, and Asn95 together coordinate a divalent metal cation.

This sequence belongs to the SurE nucleotidase family. A divalent metal cation is required as a cofactor.

Its subcellular location is the cytoplasm. It carries out the reaction a ribonucleoside 5'-phosphate + H2O = a ribonucleoside + phosphate. Its function is as follows. Nucleotidase that shows phosphatase activity on nucleoside 5'-monophosphates. This Desulfatibacillum aliphaticivorans protein is 5'-nucleotidase SurE.